The chain runs to 492 residues: Bifunctional purine biosynthesis protein PurH (492 aa).

The MGS-like domain maps to 1–144; sequence MKKAILSVSN…KNYKHVTTIV (144 aa).

Belongs to the PurH family.

It catalyses the reaction (6R)-10-formyltetrahydrofolate + 5-amino-1-(5-phospho-beta-D-ribosyl)imidazole-4-carboxamide = 5-formamido-1-(5-phospho-D-ribosyl)imidazole-4-carboxamide + (6S)-5,6,7,8-tetrahydrofolate. The enzyme catalyses IMP + H2O = 5-formamido-1-(5-phospho-D-ribosyl)imidazole-4-carboxamide. It participates in purine metabolism; IMP biosynthesis via de novo pathway; 5-formamido-1-(5-phospho-D-ribosyl)imidazole-4-carboxamide from 5-amino-1-(5-phospho-D-ribosyl)imidazole-4-carboxamide (10-formyl THF route): step 1/1. Its pathway is purine metabolism; IMP biosynthesis via de novo pathway; IMP from 5-formamido-1-(5-phospho-D-ribosyl)imidazole-4-carboxamide: step 1/1. The chain is Bifunctional purine biosynthesis protein PurH from Staphylococcus aureus (strain MSSA476).